The sequence spans 1053 residues: DNA-directed RNA polymerase subunit beta' (1053 aa).

Residues Cys-60, Cys-62, Cys-75, and Cys-78 each coordinate Zn(2+). Mg(2+) is bound by residues Asp-449, Asp-451, and Asp-453. Positions 818, 892, 899, and 902 each coordinate Zn(2+).

Belongs to the RNA polymerase beta' chain family. The RNAP catalytic core consists of 2 alpha, 1 beta, 1 beta' and 1 omega subunit. When a sigma factor is associated with the core the holoenzyme is formed, which can initiate transcription. The cofactor is Mg(2+). Zn(2+) is required as a cofactor.

The enzyme catalyses RNA(n) + a ribonucleoside 5'-triphosphate = RNA(n+1) + diphosphate. Functionally, DNA-dependent RNA polymerase catalyzes the transcription of DNA into RNA using the four ribonucleoside triphosphates as substrates. The sequence is that of DNA-directed RNA polymerase subunit beta' from Listeria grayi (Listeria murrayi).